The primary structure comprises 213 residues: LexA repressor (213 aa).

The segment at residues 27-47 (QTEIARAFGFKGIRAAQYHLE) is a DNA-binding region (H-T-H motif). Active-site for autocatalytic cleavage activity residues include Ser133 and Lys170.

It belongs to the peptidase S24 family. As to quaternary structure, homodimer.

The enzyme catalyses Hydrolysis of Ala-|-Gly bond in repressor LexA.. Functionally, represses a number of genes involved in the response to DNA damage (SOS response), including recA and lexA. Has been shown to bind to the palindromic sequence 5'-CTG-N(8-12)-C-[TC]-G. In the presence of single-stranded DNA, RecA interacts with LexA causing an autocatalytic cleavage which disrupts the DNA-binding part of LexA, leading to derepression of the SOS regulon and eventually DNA repair. This Xanthomonas citri (Xanthomonas campestris pv. citri) protein is LexA repressor.